Consider the following 448-residue polypeptide: ATP-dependent protease ATPase subunit HslU (448 aa).

ATP contacts are provided by residues valine 21, 63 to 68 (GVGKTE), aspartate 261, glutamate 326, and arginine 398.

It belongs to the ClpX chaperone family. HslU subfamily. A double ring-shaped homohexamer of HslV is capped on each side by a ring-shaped HslU homohexamer. The assembly of the HslU/HslV complex is dependent on binding of ATP.

It is found in the cytoplasm. Its function is as follows. ATPase subunit of a proteasome-like degradation complex; this subunit has chaperone activity. The binding of ATP and its subsequent hydrolysis by HslU are essential for unfolding of protein substrates subsequently hydrolyzed by HslV. HslU recognizes the N-terminal part of its protein substrates and unfolds these before they are guided to HslV for hydrolysis. This chain is ATP-dependent protease ATPase subunit HslU, found in Persephonella marina (strain DSM 14350 / EX-H1).